Reading from the N-terminus, the 345-residue chain is Guanine nucleotide-binding protein G(i) subunit alpha-3 (345 aa).

Residues 23–345 (KEVKLLLLGA…KSNLMECGLY (323 aa)) form the G-alpha domain. Positions 26-39 (KLLLLGAGESGKST) are G1 motif. GTP contacts are provided by G33, E34, S35, G36, K37, S38, T39, D141, S142, L166, R167, T168, R169, V170, K171, T172, V192, G194, N260, K261, D263, L264, C316, A317, and T318. S38 contributes to the Mg(2+) binding site. Residues 164–172 (DVLRTRVKT) form a G2 motif region. T172 contacts Mg(2+). Residues 187-196 (FKMFDVGGQR) form a G3 motif region. Residues 256 to 263 (ILFLNKKD) form a G4 motif region. Residues 315–320 (TCATDT) form a G5 motif region.

This sequence belongs to the G-alpha family. G(i/o/t/z) subfamily. In terms of assembly, heterotrimeric G proteins are composed of 3 units; alpha, beta and gamma. The alpha subunit contains the guanine nucleotide binding site. GTP binding causes dissociation of the heterotrimer, liberating the individual subunits so that they can interact with downstream effector proteins.

The protein resides in the cytoplasm. It localises to the cell membrane. The protein localises to the cytoskeleton. Its subcellular location is the microtubule organizing center. It is found in the centrosome. The protein resides in the membrane. In terms of biological role, heterotrimeric guanine nucleotide-binding proteins (G proteins) function as transducers downstream of G protein-coupled receptors (GPCRs) in numerous signaling cascades. The alpha chain contains the guanine nucleotide binding site and alternates between an active, GTP-bound state and an inactive, GDP-bound state. Signaling by an activated GPCR promotes GDP release and GTP binding. The alpha subunit has a low GTPase activity that converts bound GTP to GDP, thereby terminating the signal. Both GDP release and GTP hydrolysis are modulated by numerous regulatory proteins. Signaling is mediated via effector proteins, such as adenylate cyclase. Inhibits adenylate cyclase activity, leading to decreased intracellular cAMP levels. Stimulates the activity of receptor-regulated K(+) channels. The active GTP-bound form prevents the association of RGS14 with centrosomes and is required for the translocation of RGS14 from the cytoplasm to the plasma membrane. May play a role in cell division. The active GTP-bound form activates the calcium permeant TRPC5 ion channels. The sequence is that of Guanine nucleotide-binding protein G(i) subunit alpha-3 (gnai3) from Xenopus laevis (African clawed frog).